The following is a 403-amino-acid chain: Imidazolonepropionase (403 aa).

Fe(3+) is bound by residues His-69 and His-71. Zn(2+)-binding residues include His-69 and His-71. 4-imidazolone-5-propanoate-binding residues include Arg-78, Tyr-141, and His-174. Tyr-141 is a binding site for N-formimidoyl-L-glutamate. Fe(3+) is bound at residue His-239. Residue His-239 coordinates Zn(2+). Gln-242 provides a ligand contact to 4-imidazolone-5-propanoate. Asp-314 serves as a coordination point for Fe(3+). Asp-314 lines the Zn(2+) pocket. N-formimidoyl-L-glutamate contacts are provided by Asn-316 and Gly-318. Ser-319 contributes to the 4-imidazolone-5-propanoate binding site.

The protein belongs to the metallo-dependent hydrolases superfamily. HutI family. Zn(2+) is required as a cofactor. The cofactor is Fe(3+).

It is found in the cytoplasm. The catalysed reaction is 4-imidazolone-5-propanoate + H2O = N-formimidoyl-L-glutamate. Its pathway is amino-acid degradation; L-histidine degradation into L-glutamate; N-formimidoyl-L-glutamate from L-histidine: step 3/3. Its function is as follows. Catalyzes the hydrolytic cleavage of the carbon-nitrogen bond in imidazolone-5-propanoate to yield N-formimidoyl-L-glutamate. It is the third step in the universal histidine degradation pathway. The chain is Imidazolonepropionase from Legionella pneumophila (strain Lens).